Reading from the N-terminus, the 373-residue chain is Mannitol-1-phosphate 5-dehydrogenase (373 aa).

3 to 14 (ALHFGAGNIGRG) serves as a coordination point for NAD(+).

Belongs to the mannitol dehydrogenase family.

The catalysed reaction is D-mannitol 1-phosphate + NAD(+) = beta-D-fructose 6-phosphate + NADH + H(+). The chain is Mannitol-1-phosphate 5-dehydrogenase from Bacillus pumilus (strain SAFR-032).